Consider the following 429-residue polypeptide: Glucose-1-phosphate adenylyltransferase (429 aa).

Alpha-D-glucose 1-phosphate-binding positions include Gly162, 177 to 178 (EK), and Ser209.

Belongs to the bacterial/plant glucose-1-phosphate adenylyltransferase family. In terms of assembly, homotetramer.

The catalysed reaction is alpha-D-glucose 1-phosphate + ATP + H(+) = ADP-alpha-D-glucose + diphosphate. It functions in the pathway glycan biosynthesis; glycogen biosynthesis. Its activity is regulated as follows. Activated by 3-phosphoglycerate and inhibited by phosphate. In terms of biological role, involved in the biosynthesis of ADP-glucose, a building block required for the elongation reactions to produce glycogen. Catalyzes the reaction between ATP and alpha-D-glucose 1-phosphate (G1P) to produce pyrophosphate and ADP-Glc. The sequence is that of Glucose-1-phosphate adenylyltransferase from Nostoc sp. (strain PCC 7120 / SAG 25.82 / UTEX 2576).